The primary structure comprises 412 residues: UPF0754 membrane protein syc0451_d (412 aa).

The next 2 helical transmembrane spans lie at 8–28 (LWLLPPVVGGIIGYFTNDLAI) and 390–410 (IGGVLGVLLGCVQSLINVWSL).

This sequence belongs to the UPF0754 family.

Its subcellular location is the cell inner membrane. The sequence is that of UPF0754 membrane protein syc0451_d from Synechococcus sp. (strain ATCC 27144 / PCC 6301 / SAUG 1402/1) (Anacystis nidulans).